Consider the following 385-residue polypeptide: Anhydro-N-acetylmuramic acid kinase (385 aa).

12–19 (GTSLDGID) serves as a coordination point for ATP.

Belongs to the anhydro-N-acetylmuramic acid kinase family.

It catalyses the reaction 1,6-anhydro-N-acetyl-beta-muramate + ATP + H2O = N-acetyl-D-muramate 6-phosphate + ADP + H(+). Its pathway is amino-sugar metabolism; 1,6-anhydro-N-acetylmuramate degradation. It functions in the pathway cell wall biogenesis; peptidoglycan recycling. Catalyzes the specific phosphorylation of 1,6-anhydro-N-acetylmuramic acid (anhMurNAc) with the simultaneous cleavage of the 1,6-anhydro ring, generating MurNAc-6-P. Is required for the utilization of anhMurNAc either imported from the medium or derived from its own cell wall murein, and thus plays a role in cell wall recycling. This chain is Anhydro-N-acetylmuramic acid kinase, found in Bacillus thuringiensis (strain Al Hakam).